Consider the following 415-residue polypeptide: MQYKKPLVVSALAATSLAAYAPKDPWSTLTPSATYKGGITDYSSSFGIAIEAVATSASSVASSKAKRAASQIGDGQVQAATTTAAVSKKSTAAAVSQITDGQVQAAKSTAAAASQISDGQVQAAKSTAAAVSQITDGQVQAAKSTAAAVSQITDGQVQAAKSTAAAVSQITDGQVQAAKSTAAAVSQITDGQVQAAKSTAAAASQISDGQVQAAKSTAAAASQISDGQVQAAKSTAAAASQISDGQVQAAKSTAAAASQISDGQVQATTSTKAAASQITDGQIQASKTTSGASQVSDGQVQATAEVKDANDPVDVVSCNNNSTLSMSLSKGILTDRKGRIGSIVANRQFQFDGPPPQAGAIYAAGWSITPEGNLALGDQDTFYQCLSGDFYNLYDKHIGSQCHEVYLQAIDLIDC.

An N-terminal signal peptide occupies residues 1–18 (MQYKKPLVVSALAATSLA). The propeptide occupies 19–67 (AYAPKDPWSTLTPSATYKGGITDYSSSFGIAIEAVATSASSVASSKAKR). PIR1/2/3 repeat units lie at residues 66-84 (KRAA…TTTA), 92-109 (AAAV…AKST), 110-127 (AAAA…AKST), 128-145 (AAAV…AKST), 146-163 (AAAV…AKST), 164-181 (AAAV…AKST), 182-199 (AAAV…AKST), 200-217 (AAAA…AKST), 218-235 (AAAA…AKST), 236-253 (AAAA…AKST), 254-271 (AAAA…TTST), 272-288 (KAAA…ASKT), and 289-307 (TSGA…AEVK).

Belongs to the PIR protein family. In terms of processing, covalently linked to beta-1,3-glucan of the inner cell wall layer via an alkali-sensitive ester linkage between the gamma-carboxyl group of glutamic acids, arising from specific glutamines within the PIR1/2/3 repeats, and hydroxyl groups of glucoses of beta-1,3-glucan chains. Post-translationally, O-glycosylated. Extensively O-mannosylated.

It localises to the secreted. The protein localises to the cell wall. In terms of biological role, component of the outer cell wall layer. Required for stability of the cell wall and for optimal growth. Required for resistance against several antifungal and cell wall-perturbing agents. This is Cell wall mannoprotein PIR3 (PIR3) from Saccharomyces cerevisiae (strain YJM789) (Baker's yeast).